Consider the following 1368-residue polypeptide: DNA-directed RNA polymerase subunit beta (1368 aa).

The protein belongs to the RNA polymerase beta chain family. In terms of assembly, the RNAP catalytic core consists of 2 alpha, 1 beta, 1 beta' and 1 omega subunit. When a sigma factor is associated with the core the holoenzyme is formed, which can initiate transcription.

It catalyses the reaction RNA(n) + a ribonucleoside 5'-triphosphate = RNA(n+1) + diphosphate. DNA-dependent RNA polymerase catalyzes the transcription of DNA into RNA using the four ribonucleoside triphosphates as substrates. This Paraburkholderia xenovorans (strain LB400) protein is DNA-directed RNA polymerase subunit beta.